The sequence spans 322 residues: Replication factor C small subunit (322 aa).

Position 50–57 (50–57) interacts with ATP; it reads GPAGTGKT.

It belongs to the activator 1 small subunits family. RfcS subfamily. In terms of assembly, heteromultimer composed of small subunits (RfcS) and large subunits (RfcL).

Functionally, part of the RFC clamp loader complex which loads the PCNA sliding clamp onto DNA. This chain is Replication factor C small subunit, found in Halobacterium salinarum (strain ATCC 700922 / JCM 11081 / NRC-1) (Halobacterium halobium).